Reading from the N-terminus, the 271-residue chain is DNA-binding protein HEXBP (271 aa).

2 stretches are compositionally biased toward basic and acidic residues: residues 1–12 and 21–42; these read MSETEDVKRPRT and CGKE…DERS. Residues 1–42 are disordered; sequence MSETEDVKRPRTESSTSCRNCGKEGHYARECPEADSKGDERS. 4 consecutive CCHC-type zinc fingers follow at residues 16-33, 43-60, 70-87, and 97-114; these read TSCR…ECPE, TTCF…ECPN, MTCF…DCPN, and FECY…DCPS. The segment at 107–136 is disordered; that stretch reads HLSRDCPSSQGGSRGGYGQKRGRSGAQGGY. A compositionally biased stretch (gly residues) spans 118-136; the sequence is GSRGGYGQKRGRSGAQGGY. CCHC-type zinc fingers lie at residues 140–157, 168–185, 196–213, 222–239, and 253–270; these read RTCY…DCPN, RKCY…ECPS, RACY…ECPE, and RTCY…DCPS.

The protein resides in the nucleus. In terms of biological role, binds to single-stranded DNA located in the 5' hexanucleotide repeat region of the L.major leishmanolysin (GP63) gene. The sequence is that of DNA-binding protein HEXBP (HEXBP) from Leishmania major.